The following is a 574-amino-acid chain: MNLKNTIKEDIQDALIKIAIINCDPVITLNKKTKIGHYQLNNLIKIANISNLKPFELANRIILNIKKKYMYKEITFSQPGFINFLINPYWISEQLEKIFLSPRLGINHVNAQNIVIDYSSPNIAKEMHIGHLRSTIIGDVMARILDFLGHNVIRANHIGDWGTQFGMLIAYLEVKKLVNSPLSLMKLEEYYCKAKKKYDIDQLFAEKSREYVVKLQNGDQYCYSIWKKLVSITMLENCKIYKRLHVTLKKKHTMGESIYNKMLPNIIEDLKNKKIAIEKNGSTIVFLKEFKNRLGEPMGVVIQKKDKGFLYSTTDIACLKYRYQVLHADRIIYYTDSRQHQHLLQAWTIAKKALYISQNLLLEHHIFGMMLSKDKRPFKTRDGDTIKLSALLDEATERAMRLIKNKQPNLSKKKLNQLSNIIGVGAVKYADLSKNRNTNYIFDWNEMLSFEGNTAPYIQYAYTRIVSILKKSNMPIKKLKEKIFLTKESEINLAIKILEFEEIILLISQKGTPHILCKYLYHLATSFSHFYENCSILFPKKIKTCKSRLKLSILTAKTLKKGLNMLGIRVVKKM.

The short motif at 121–131 (PNIAKEMHIGH) is the 'HIGH' region element.

Belongs to the class-I aminoacyl-tRNA synthetase family. Monomer.

It localises to the cytoplasm. The enzyme catalyses tRNA(Arg) + L-arginine + ATP = L-arginyl-tRNA(Arg) + AMP + diphosphate. This Buchnera aphidicola subsp. Acyrthosiphon pisum (strain 5A) protein is Arginine--tRNA ligase.